The primary structure comprises 378 residues: MYSPIRKSHPLLKMMSGSFSDLPSPSNFSIWWNFGSLLGLCLVIQILSGLFLSMHYTSHVDLAFSSVAHIGRDVNYGWLLRSIHANGASFFFMCLYCHIGRGMYYMSYFFMETWNVGVVIFFLTMGTAFVGYVLPWGQMSFWGATVITNLASAIPYIGEILVQWVWGGFSVDNATLTRFFSFHFLFPFMIAGLSMVHLLFLHQTGSNNPLGLNSDCDKIPFHWFYSTKDIAGFLVFFFVFFIVVLLYPNGFTDPENFIPANPLVTPVHIQPEWYFLFAYAILRSIPNKLGGVVSLVASIAILFCLPLTISLMKFRSLVFYPLNQILFWSFCSIFLLLTWIGMRPVEDPYIFIGQILTVLYFSYFLLNPLILKFWDNLY.

The next 4 helical transmembrane spans lie at 34-54, 78-100, 113-133, and 179-199; these read FGSL…FLSM, WLLR…CHIG, TWNV…VGYV, and FFSF…VHLL. The heme b site is built by H84 and H98. Heme b contacts are provided by H183 and H197. H202 serves as a coordination point for a ubiquinone. 4 helical membrane-spanning segments follow: residues 225 to 245, 289 to 306, 313 to 342, and 350 to 369; these read YSTK…IVVL, LGGV…FCLP, KFRS…WIGM, and IFIG…LNPL.

It belongs to the cytochrome b family. In terms of assembly, the main subunits of complex b-c1 are: cytochrome b, cytochrome c1 and the Rieske protein. The cofactor is heme b.

The protein localises to the mitochondrion inner membrane. Its function is as follows. Component of the ubiquinol-cytochrome c reductase complex (complex III or cytochrome b-c1 complex) that is part of the mitochondrial respiratory chain. The b-c1 complex mediates electron transfer from ubiquinol to cytochrome c. Contributes to the generation of a proton gradient across the mitochondrial membrane that is then used for ATP synthesis. This is Cytochrome b (mt:Cyt-b) from Loxocorone allax (Goblet worm).